Reading from the N-terminus, the 179-residue chain is Acireductone dioxygenase (179 aa).

The segment covering 1 to 12 (MVEAWYMDDSEE) has biased composition (acidic residues). The tract at residues 1-21 (MVEAWYMDDSEEDQRRPHRLE) is disordered. Residues His-88, His-90, Glu-94, and His-133 each contribute to the Fe(2+) site. His-88, His-90, Glu-94, and His-133 together coordinate Ni(2+).

This sequence belongs to the acireductone dioxygenase (ARD) family. As to quaternary structure, monomer. Interacts with MMP14. It depends on Fe(2+) as a cofactor. The cofactor is Ni(2+).

The protein resides in the cytoplasm. It is found in the nucleus. It localises to the cell membrane. It carries out the reaction 1,2-dihydroxy-5-(methylsulfanyl)pent-1-en-3-one + O2 = 4-methylsulfanyl-2-oxobutanoate + formate + 2 H(+). The catalysed reaction is 1,2-dihydroxy-5-(methylsulfanyl)pent-1-en-3-one + O2 = 3-(methylsulfanyl)propanoate + CO + formate + 2 H(+). It participates in amino-acid biosynthesis; L-methionine biosynthesis via salvage pathway; L-methionine from S-methyl-5-thio-alpha-D-ribose 1-phosphate: step 5/6. Its function is as follows. Catalyzes 2 different reactions between oxygen and the acireductone 1,2-dihydroxy-3-keto-5-methylthiopentene (DHK-MTPene) depending upon the metal bound in the active site. Fe-containing acireductone dioxygenase (Fe-ARD) produces formate and 2-keto-4-methylthiobutyrate (KMTB), the alpha-ketoacid precursor of methionine in the methionine recycle pathway. Ni-containing acireductone dioxygenase (Ni-ARD) produces methylthiopropionate, carbon monoxide and formate, and does not lie on the methionine recycle pathway. Also down-regulates cell migration mediated by MMP14. The protein is Acireductone dioxygenase of Monodelphis domestica (Gray short-tailed opossum).